Here is a 131-residue protein sequence, read N- to C-terminus: UPF0102 protein YraN (131 aa).

This sequence belongs to the UPF0102 family.

The chain is UPF0102 protein YraN from Salmonella typhimurium (strain LT2 / SGSC1412 / ATCC 700720).